A 228-amino-acid chain; its full sequence is Geranylgeranylglyceryl phosphate synthase (228 aa).

A sn-glycerol 1-phosphate-binding site is contributed by K13. D15 and T41 together coordinate Mg(2+). Sn-glycerol 1-phosphate contacts are provided by residues 159-164 (YVEYSG), G189, and 209-210 (GN).

It belongs to the GGGP/HepGP synthase family. Group I subfamily. The cofactor is Mg(2+).

The protein localises to the cytoplasm. It carries out the reaction sn-glycerol 1-phosphate + (2E,6E,10E)-geranylgeranyl diphosphate = sn-3-O-(geranylgeranyl)glycerol 1-phosphate + diphosphate. The protein operates within membrane lipid metabolism; glycerophospholipid metabolism. Its function is as follows. Prenyltransferase that catalyzes the transfer of the geranylgeranyl moiety of geranylgeranyl diphosphate (GGPP) to the C3 hydroxyl of sn-glycerol-1-phosphate (G1P). This reaction is the first ether-bond-formation step in the biosynthesis of archaeal membrane lipids. The sequence is that of Geranylgeranylglyceryl phosphate synthase from Methanosphaerula palustris (strain ATCC BAA-1556 / DSM 19958 / E1-9c).